The sequence spans 139 residues: Acidic phospholipase A2 S1E6-c (139 aa).

Residues 1–16 (MRTLWILAVLLVGVEG) form the signal peptide. 7 disulfide bridges follow: Cys42/Cys132, Cys44/Cys60, Cys59/Cys111, Cys65/Cys139, Cys66/Cys104, Cys73/Cys97, and Cys91/Cys102. Positions 43, 45, and 47 each coordinate Ca(2+). His63 is a catalytic residue. Asp64 contacts Ca(2+). Asp105 is a catalytic residue.

The protein belongs to the phospholipase A2 family. Group II subfamily. D49 sub-subfamily. In terms of assembly, homodimer. The cofactor is Ca(2+). In terms of tissue distribution, expressed by the venom gland.

It localises to the secreted. The catalysed reaction is a 1,2-diacyl-sn-glycero-3-phosphocholine + H2O = a 1-acyl-sn-glycero-3-phosphocholine + a fatty acid + H(+). Its function is as follows. Snake venom phospholipase A2 (PLA2) that inhibits ADP-induced platelet aggregation. PLA2 catalyzes the calcium-dependent hydrolysis of the 2-acyl groups in 3-sn-phosphoglycerides. The chain is Acidic phospholipase A2 S1E6-c from Calloselasma rhodostoma (Malayan pit viper).